The sequence spans 524 residues: Secologanin synthase 1 (524 aa).

Topologically, residues 1–11 (MEMDMDTIRKA) are lumenal. A helical membrane pass occupies residues 12-32 (IAATIFALVMAWAWRVLDWAW). The Cytoplasmic portion of the chain corresponds to 33 to 524 (FTPKRIEKRL…SHVIYKKLES (492 aa)). Cys470 serves as a coordination point for heme.

It belongs to the cytochrome P450 family. Heme serves as cofactor. In terms of tissue distribution, upper and lower leaf epidermis.

The protein resides in the endoplasmic reticulum membrane. The enzyme catalyses loganin + reduced [NADPH--hemoprotein reductase] + O2 = secologanin + oxidized [NADPH--hemoprotein reductase] + 2 H2O + H(+). It carries out the reaction secologanin + reduced [NADPH--hemoprotein reductase] + O2 = secoxyloganin + oxidized [NADPH--hemoprotein reductase] + H2O + 2 H(+). It functions in the pathway alkaloid biosynthesis; secologanin biosynthesis. Functionally, component of the seco-iridoid and derivatives monoterpenoid indole alkaloids (MIAs, e.g. secologanin) biosynthesis pathway. Catalyzes the conversion of loganin into secologanin. Catalyzes the conversion of secologanin into secoxyloganin. This chain is Secologanin synthase 1, found in Catharanthus roseus (Madagascar periwinkle).